The sequence spans 1072 residues: Integrator complex subunit 3 homolog (1072 aa).

Disordered stretches follow at residues 920–941 and 1002–1072; these read YPSS…STSI and DTTV…NDSD. A phosphoserine mark is found at Ser-1042, Ser-1043, Ser-1047, and Ser-1048.

This sequence belongs to the Integrator subunit 3 family. In terms of assembly, belongs to the multiprotein complex Integrator, at least composed of IntS1, IntS2, IntS3, IntS4, omd/IntS5, IntS6, defl/IntS7, IntS8, IntS9, IntS10, IntS11, IntS12, asun/IntS13, IntS14 and IntS15. The core complex associates with protein phosphatase 2A subunits mts/PP2A and Pp2A-29B, to form the Integrator-PP2A (INTAC) complex.

The protein resides in the nucleus. The protein localises to the cytoplasm. In terms of biological role, component of the integrator complex, a multiprotein complex that terminates RNA polymerase II (Pol II) transcription in the promoter-proximal region of genes. The integrator complex provides a quality checkpoint during transcription elongation by driving premature transcription termination of transcripts that are unfavorably configured for transcriptional elongation: the complex terminates transcription by (1) catalyzing dephosphorylation of the C-terminal domain (CTD) of Pol II subunit Polr2A/Rbp1 and Spt5, and (2) degrading the exiting nascent RNA transcript via endonuclease activity. The integrator complex is also involved in the 3'-end processing of the U7 snRNA, and also the spliceosomal snRNAs U1, U2, U4 and U5. The chain is Integrator complex subunit 3 homolog (IntS3) from Drosophila erecta (Fruit fly).